The following is a 677-amino-acid chain: MTMSRADQILQHLLRELIHNDSLVASEWLKHSKKIIQNVPSSTLVFHEMIEHIKGICDKMGIQGREDLEMPLRNACEVLNRQTVSVKQSILHAQILKLFLELSKPPSDIHVPQIPVYKDCNKNEQEAIIQLLTSCEGDHWLMPDWSSMPDDETITEDSEEETFNGNANEITIPANIHIPIIEESDNASNNKLCTLFKKSKQPNLDFLQIKPFMFWDSSLNETVRISERSIIRDSIYMLIGYPSFFFLKNGSKIETRLSLLPKLHHMSEEILRSIMTELADYGSNLEFFRQKLTSPSDSFFKSDDQSTKNEPFLSVVFIYPQIKPHLLSCLKNTHQELIKLETEVYNATKNCTLFQFFQHVKKFVDPLLCFRFAYEKSATNMWDFVKTLEFIYSTRNYSSQMFKLYKASAIAMLLWMVNQASQITSSMTIARPLYNILILCKDFPNNFLEKDNIALQLGSIVFDQSPTLNNLLVEMEILIRSKILKLGKSLDLSFDFQSLMGEFENLIKQQEEAKKSLWSKRFSRFYYGHYVFVNTCHNFFLTLYQSFTEVDENSIFNGVFETLNNDVDDESVIGEKEKLILKQKQKCLSEFFVDDIKKLLNEELLNCQKQELPDVMENTYQISTVSGIKNDPLFTLDQTCNIIAKLADNLIHPSVPIGSSAYRCRRNLADLLFLIMP.

As to quaternary structure, component of the gamma-tubulin complex composed of at least alp4, alp6, alp16, ghf1, gtb1 and mod21.

It is found in the cytoplasm. The protein localises to the cytoskeleton. It localises to the microtubule organizing center. Its subcellular location is the spindle pole body. Its function is as follows. Component of the gamma-tubulin complex that is required for the regulation of both interphase microtubule organization and nucleation, and mitotic bipolar spindles. Required for correct septation. The sequence is that of Gamma-tubulin complex subunit mod21 from Schizosaccharomyces pombe (strain 972 / ATCC 24843) (Fission yeast).